The sequence spans 62 residues: MTIAFQLALFALIATSSILLISVPIVFASSDGWSSNKNVVFSGTSLWIGLVFLVAILNSLIS.

The next 2 helical transmembrane spans lie at 8-28 and 41-61; these read ALFA…IVFA and FSGT…NSLI.

Belongs to the PsbZ family. As to quaternary structure, PSII is composed of 1 copy each of membrane proteins PsbA, PsbB, PsbC, PsbD, PsbE, PsbF, PsbH, PsbI, PsbJ, PsbK, PsbL, PsbM, PsbT, PsbY, PsbZ, Psb30/Ycf12, at least 3 peripheral proteins of the oxygen-evolving complex and a large number of cofactors. It forms dimeric complexes.

Its subcellular location is the plastid. It is found in the chloroplast thylakoid membrane. May control the interaction of photosystem II (PSII) cores with the light-harvesting antenna, regulates electron flow through the 2 photosystem reaction centers. PSII is a light-driven water plastoquinone oxidoreductase, using light energy to abstract electrons from H(2)O, generating a proton gradient subsequently used for ATP formation. This chain is Photosystem II reaction center protein Z, found in Drimys granadensis.